The following is a 362-amino-acid chain: 3-dehydroquinate synthase (362 aa).

Residues 71-76 (DGEQNK), 105-109 (GVIGD), 129-130 (TT), lysine 142, and lysine 151 contribute to the NAD(+) site. Zn(2+)-binding residues include glutamate 184, histidine 247, and histidine 264.

The protein belongs to the sugar phosphate cyclases superfamily. Dehydroquinate synthase family. It depends on Co(2+) as a cofactor. Zn(2+) is required as a cofactor. Requires NAD(+) as cofactor.

The protein resides in the cytoplasm. It carries out the reaction 7-phospho-2-dehydro-3-deoxy-D-arabino-heptonate = 3-dehydroquinate + phosphate. The protein operates within metabolic intermediate biosynthesis; chorismate biosynthesis; chorismate from D-erythrose 4-phosphate and phosphoenolpyruvate: step 2/7. Its function is as follows. Catalyzes the conversion of 3-deoxy-D-arabino-heptulosonate 7-phosphate (DAHP) to dehydroquinate (DHQ). This chain is 3-dehydroquinate synthase, found in Blochmanniella pennsylvanica (strain BPEN).